The following is a 363-amino-acid chain: Pyrimidine monooxygenase RutA (363 aa).

Residues Ile49 to Lys50, Asn115, Glu124, Arg140 to Tyr141, and Ser190 each bind FMN.

It belongs to the NtaA/SnaA/DszA monooxygenase family. RutA subfamily.

It catalyses the reaction uracil + FMNH2 + NADH + O2 = (Z)-3-ureidoacrylate + FMN + NAD(+) + H2O + H(+). It carries out the reaction thymine + FMNH2 + NADH + O2 = (Z)-2-methylureidoacrylate + FMN + NAD(+) + H2O + H(+). Its function is as follows. Catalyzes the pyrimidine ring opening between N-3 and C-4 by an unusual flavin hydroperoxide-catalyzed mechanism, adding oxygen atoms in the process to yield ureidoacrylate peracid, that immediately reacts with FMN forming ureidoacrylate and FMN-N(5)-oxide. The FMN-N(5)-oxide reacts spontaneously with NADH to produce FMN. Requires the flavin reductase RutF to regenerate FMN in vivo. This Escherichia coli O6:K15:H31 (strain 536 / UPEC) protein is Pyrimidine monooxygenase RutA.